The following is a 781-amino-acid chain: Chloride channel protein CLC-f (781 aa).

Disordered stretches follow at residues 1-41 (MSSG…QSPA) and 79-98 (RERHNPSSSSAFSAAGEEDG). The segment covering 10-20 (NEDRHLLRSTD) has biased composition (basic and acidic residues). 12 consecutive transmembrane segments (helical) span residues 129-149 (WALLLIGCLIGVAAGICVAGF), 184-204 (ILLIPVTGGVIVGMMHGLLEI), 221-241 (FLAGIYPVIKAIQAAVTLGTG), 250-270 (SVDIGKSCANGFALMMENNRE), 279-299 (GAASGIASGFNAAVAGCFFAI), 314-334 (FTTAMIILASVISSTVSNALL), 350-370 (AAELPLYLILGMLCGAVSVVF), 388-408 (FGLPAIVCPALGGLGAGIIAL), 433-453 (APGIWLLAQLAAAKVVATALC), 457-477 (GLVGGLYAPSLMIGAAVGAVF), 502-522 (ALVGMAATLASMCSVPLTSVL), and 523-543 (LLFELTKDYRILLPLMGAVGL). The segment at 553–584 (QGKESDSSEGRSTGRGYSSLSPSERKTEGVWR) is disordered. Positions 575 to 584 (SERKTEGVWR) are enriched in basic and acidic residues. CBS domains lie at 621 to 677 (MSKN…NAST) and 699 to 763 (QERG…EMSR). Residues 726-746 (QLPVVKRGEVIHKGKRRKLLG) form a helical membrane-spanning segment.

This sequence belongs to the chloride channel (TC 2.A.49) family. Homodimer.

Its subcellular location is the membrane. Functionally, voltage-gated chloride channel. The polypeptide is Chloride channel protein CLC-f (CLC-F) (Arabidopsis thaliana (Mouse-ear cress)).